The chain runs to 473 residues: 3-isopropylmalate dehydratase large subunit (473 aa).

Residues Cys354, Cys414, and Cys417 each coordinate [4Fe-4S] cluster.

This sequence belongs to the aconitase/IPM isomerase family. LeuC type 1 subfamily. As to quaternary structure, heterodimer of LeuC and LeuD. [4Fe-4S] cluster serves as cofactor.

It carries out the reaction (2R,3S)-3-isopropylmalate = (2S)-2-isopropylmalate. The protein operates within amino-acid biosynthesis; L-leucine biosynthesis; L-leucine from 3-methyl-2-oxobutanoate: step 2/4. Its function is as follows. Catalyzes the isomerization between 2-isopropylmalate and 3-isopropylmalate, via the formation of 2-isopropylmaleate. This chain is 3-isopropylmalate dehydratase large subunit, found in Mycobacterium bovis (strain ATCC BAA-935 / AF2122/97).